The following is a 394-amino-acid chain: Elongation factor Tu (394 aa).

Positions 10–204 (KPHLNVGTIG…TLDTYIEDPV (195 aa)) constitute a tr-type G domain. The interval 19 to 26 (GHVDHGKT) is G1. 19–26 (GHVDHGKT) lines the GTP pocket. T26 lines the Mg(2+) pocket. A G2 region spans residues 60 to 64 (GITIK). The tract at residues 81–84 (DCPG) is G3. Residues 81–85 (DCPGH) and 136–139 (NKCD) each bind GTP. Positions 136–139 (NKCD) are G4. The interval 174–176 (SAL) is G5.

Belongs to the TRAFAC class translation factor GTPase superfamily. Classic translation factor GTPase family. EF-Tu/EF-1A subfamily. Monomer.

It localises to the cytoplasm. It catalyses the reaction GTP + H2O = GDP + phosphate + H(+). GTP hydrolase that promotes the GTP-dependent binding of aminoacyl-tRNA to the A-site of ribosomes during protein biosynthesis. This Onion yellows phytoplasma (strain OY-M) protein is Elongation factor Tu.